Consider the following 678-residue polypeptide: MTKNLLVELGLEELPAYVVTPSEKQLGEKMAAFLKGKRLSFEAIQTFSTPRRLAVRVTGLSDKQSDLTEDFKGPAKKIALDSDGNFTKAAQGFVRGKGLTVEDIEFREIKGEEYVYVTKEEIGQAVEAIVPGIVDVLKSLTFPVSMHWAGNSFEYIRPVHTLTVLLDEQEFDLDFLDIKGSRVSRGHRFLGKETKIQSALSYEEDLRKQFVIADPCEREQMIVDQIKEIEAKHDVRIEIDADLLNEVLNLVEYPTAFMGSFDAKYLEVPEEVLVTSMKEHQRYFVVRDQDGKLLPNFISVRNGNAERLKNVIKGNEKVLVARLEDGEFFWREDQKLVISDLVEKLNNVTFHEKIGSLREHMIRTGQITVLLAEKADLSVDETVDLARAAAIYKFDLLTGMVGEFDELQGIMGEKYTLLAGETPAVAAAIREHYMPTSAEGELPESKVGAVLAIADKLDTILSFFSVGLIPSGSNDPYALRRATQGVVRILDAFGWHIAMDELIDSLYALKFDSLTYENKAEVMDFIKARVDKMMGSTPKDIKEAVLAGSNFVVADMLEAASALVEVSKEEDFKPSVESLSRAFNLAEKAEGVATVDSALFENDQEKALAEAVETLVLSGPASQQLKQLFALSPVIDAFFENTMVMAEDQAVRQNRLAILSQLTKKAAKFACFNQINTK.

It belongs to the class-II aminoacyl-tRNA synthetase family. Tetramer of two alpha and two beta subunits.

The protein localises to the cytoplasm. It catalyses the reaction tRNA(Gly) + glycine + ATP = glycyl-tRNA(Gly) + AMP + diphosphate. The chain is Glycine--tRNA ligase beta subunit from Streptococcus pneumoniae (strain 70585).